The sequence spans 329 residues: GTP 3',8-cyclase (329 aa).

The region spanning 8-234 (AFARKFYYLR…QLRQRSDGPA (227 aa)) is the Radical SAM core domain. Position 17 (R17) interacts with GTP. Positions 24 and 28 each coordinate [4Fe-4S] cluster. Position 30 (Y30) interacts with S-adenosyl-L-methionine. A [4Fe-4S] cluster-binding site is contributed by C31. R68 contacts GTP. G72 contributes to the S-adenosyl-L-methionine binding site. Residue T99 coordinates GTP. S123 provides a ligand contact to S-adenosyl-L-methionine. K160 provides a ligand contact to GTP. An S-adenosyl-L-methionine-binding site is contributed by M194. Positions 257 and 260 each coordinate [4Fe-4S] cluster. 262-264 (RLR) is a GTP binding site. Residue C274 coordinates [4Fe-4S] cluster.

Belongs to the radical SAM superfamily. MoaA family. Monomer and homodimer. Requires [4Fe-4S] cluster as cofactor.

It carries out the reaction GTP + AH2 + S-adenosyl-L-methionine = (8S)-3',8-cyclo-7,8-dihydroguanosine 5'-triphosphate + 5'-deoxyadenosine + L-methionine + A + H(+). It functions in the pathway cofactor biosynthesis; molybdopterin biosynthesis. In terms of biological role, catalyzes the cyclization of GTP to (8S)-3',8-cyclo-7,8-dihydroguanosine 5'-triphosphate. The protein is GTP 3',8-cyclase of Escherichia coli O7:K1 (strain IAI39 / ExPEC).